A 265-amino-acid polypeptide reads, in one-letter code: Sarcotoxin II-1 (265 aa).

The signal sequence occupies residues 1–22; the sequence is MKSFVLFAACMAIIALGSLAHA. Positions 23–24 are cleaved as a propeptide — removed by a dipeptidylpeptidase; sequence YP. Glutamine 25 carries the pyrrolidone carboxylic acid modification. Glycine amide is present on glycine 264.

It belongs to the attacin/sarcotoxin-2 family. Synthesized by the fat body and is eventually secreted into the hemolymph.

It is found in the secreted. In terms of biological role, sarcotoxin II is an antibacterial protein which plays a role in the inflammatory response of this insect. The main effect of sarcotoxin II on E.coli may be the inhibition of cell wall synthesis, including septum formation. This is Sarcotoxin II-1 from Sarcophaga peregrina (Flesh fly).